The sequence spans 321 residues: Lipoyl synthase (321 aa).

The tract at residues 1–21 (MRHRWEDRPVAPPPDGRPTEY) is disordered. Positions 63, 68, 74, 89, 93, 96, and 302 each coordinate [4Fe-4S] cluster. The region spanning 75-291 (WNNRTATFMI…KKLGLEMGFS (217 aa)) is the Radical SAM core domain. A disordered region spans residues 301–321 (SSYHAHEQTEDARRGALGARG). Residues 304–314 (HAHEQTEDARR) are compositionally biased toward basic and acidic residues.

Belongs to the radical SAM superfamily. Lipoyl synthase family. [4Fe-4S] cluster is required as a cofactor.

Its subcellular location is the cytoplasm. The enzyme catalyses [[Fe-S] cluster scaffold protein carrying a second [4Fe-4S](2+) cluster] + N(6)-octanoyl-L-lysyl-[protein] + 2 oxidized [2Fe-2S]-[ferredoxin] + 2 S-adenosyl-L-methionine + 4 H(+) = [[Fe-S] cluster scaffold protein] + N(6)-[(R)-dihydrolipoyl]-L-lysyl-[protein] + 4 Fe(3+) + 2 hydrogen sulfide + 2 5'-deoxyadenosine + 2 L-methionine + 2 reduced [2Fe-2S]-[ferredoxin]. It participates in protein modification; protein lipoylation via endogenous pathway; protein N(6)-(lipoyl)lysine from octanoyl-[acyl-carrier-protein]: step 2/2. Its function is as follows. Catalyzes the radical-mediated insertion of two sulfur atoms into the C-6 and C-8 positions of the octanoyl moiety bound to the lipoyl domains of lipoate-dependent enzymes, thereby converting the octanoylated domains into lipoylated derivatives. This chain is Lipoyl synthase, found in Rubrobacter xylanophilus (strain DSM 9941 / JCM 11954 / NBRC 16129 / PRD-1).